The primary structure comprises 118 residues: Ribosome-binding factor A (118 aa).

This sequence belongs to the RbfA family. Monomer. Binds 30S ribosomal subunits, but not 50S ribosomal subunits or 70S ribosomes.

The protein localises to the cytoplasm. Its function is as follows. One of several proteins that assist in the late maturation steps of the functional core of the 30S ribosomal subunit. Associates with free 30S ribosomal subunits (but not with 30S subunits that are part of 70S ribosomes or polysomes). Required for efficient processing of 16S rRNA. May interact with the 5'-terminal helix region of 16S rRNA. The sequence is that of Ribosome-binding factor A from Dehalococcoides mccartyi (strain ATCC BAA-2266 / KCTC 15142 / 195) (Dehalococcoides ethenogenes (strain 195)).